The sequence spans 110 residues: uncharacterized protein (110 aa).

Transmembrane regions (helical) follow at residues Val-32–Pro-52, Tyr-57–Ile-77, and Phe-90–Ile-110.

Its subcellular location is the membrane. May play a role in proper chromosome segregation. Suppresses the high-frequency loss of mini-chromosomes when overexpressed, and this suppression is completely dependent on silencing protein SIR4. This is an uncharacterized protein from Saccharomyces cerevisiae (strain ATCC 204508 / S288c) (Baker's yeast).